The primary structure comprises 189 residues: Crossover junction endodeoxyribonuclease RuvC (189 aa).

Active-site residues include D7, E68, and D141. Mg(2+) contacts are provided by D7, E68, and D141.

The protein belongs to the RuvC family. In terms of assembly, homodimer which binds Holliday junction (HJ) DNA. The HJ becomes 2-fold symmetrical on binding to RuvC with unstacked arms; it has a different conformation from HJ DNA in complex with RuvA. In the full resolvosome a probable DNA-RuvA(4)-RuvB(12)-RuvC(2) complex forms which resolves the HJ. The cofactor is Mg(2+).

It is found in the cytoplasm. The catalysed reaction is Endonucleolytic cleavage at a junction such as a reciprocal single-stranded crossover between two homologous DNA duplexes (Holliday junction).. Functionally, the RuvA-RuvB-RuvC complex processes Holliday junction (HJ) DNA during genetic recombination and DNA repair. Endonuclease that resolves HJ intermediates. Cleaves cruciform DNA by making single-stranded nicks across the HJ at symmetrical positions within the homologous arms, yielding a 5'-phosphate and a 3'-hydroxyl group; requires a central core of homology in the junction. The consensus cleavage sequence is 5'-(A/T)TT(C/G)-3'. Cleavage occurs on the 3'-side of the TT dinucleotide at the point of strand exchange. HJ branch migration catalyzed by RuvA-RuvB allows RuvC to scan DNA until it finds its consensus sequence, where it cleaves and resolves the cruciform DNA. The protein is Crossover junction endodeoxyribonuclease RuvC of Chlorobium phaeovibrioides (strain DSM 265 / 1930) (Prosthecochloris vibrioformis (strain DSM 265)).